Consider the following 321-residue polypeptide: Geranylgeranyl transferase type-2 subunit beta 1 (321 aa).

Residue Ser-2 is modified to N-acetylserine. PFTB repeat units lie at residues 14-55 (ADKH…DLLD), 62-103 (EEEV…ALFD), 110-151 (IGKV…SILK), 158-199 (VEKA…AITG), 206-247 (KDSL…IMID), and 254-296 (KAKL…SLLE). Residues 184-186 (HAG) and 226-229 (RPEK) contribute to the geranylgeranyl diphosphate site. Zn(2+) is bound by residues Asp-232 and Cys-234. 235–238 (YSWW) contributes to the geranylgeranyl diphosphate binding site. His-284 lines the Zn(2+) pocket.

It belongs to the protein prenyltransferase subunit beta family. Heterotrimer composed of the alpha subunit RGTA, the beta subunit RGTB and REP; within this trimer, RGTA and RGTB form the catalytic component, while REP mediates peptide substrate binding. Zn(2+) is required as a cofactor. It depends on Mg(2+) as a cofactor.

It carries out the reaction geranylgeranyl diphosphate + L-cysteinyl-[protein] = S-geranylgeranyl-L-cysteinyl-[protein] + diphosphate. Its activity is regulated as follows. The enzymatic reaction requires the aid of the Rab escort protein REP. In terms of biological role, catalyzes the transfer of a geranylgeranyl moiety from geranylgeranyl diphosphate to both cysteines of Rab proteins with the C-terminal sequence -CCXX, CXXX, -XCCX and -XCXC, such as RABA1A, RABA2A, RABF2A and RABG2. Involved in the geranylgeranylation of RABA2A. In vitro, can prenylate PGGTI targets with the C-terminal sequence Cys-aliphatic-aliphatic-X (CaaX) with leucine in the terminal position. Substrates with the C-terminal sequence -CSIL such as ARAC11/ROP1 or GG2/AGG2 are prenylated independently of REP and when the beta subunit is associated with the alpha subunit RGTA1. Functionally, required for male fertility and root tip growth. This Arabidopsis thaliana (Mouse-ear cress) protein is Geranylgeranyl transferase type-2 subunit beta 1.